Reading from the N-terminus, the 405-residue chain is Low-salt glycan biosynthesis sulfotransferase Agl7 (405 aa).

Positions 24, 201, and 202 each coordinate Ca(2+).

It belongs to the sulfatase family. The cofactor is Ca(2+).

It functions in the pathway protein modification; protein glycosylation. It participates in cell surface structure biogenesis; S-layer biogenesis. Its function is as follows. Involved in N-glycan biosynthetic pathway that takes place under low-salt conditions (1.75 M instead of 3.4 M). Participates in the formation of the tetrasaccharide present at 'Asn-532' of S-layer glycoprotein Csg, consisting of a sulfated hexose, 2 hexoses and rhamnose. Mediates sulfation of sugar 1 in the tetrasaccharide. This is Low-salt glycan biosynthesis sulfotransferase Agl7 from Haloferax volcanii (strain ATCC 29605 / DSM 3757 / JCM 8879 / NBRC 14742 / NCIMB 2012 / VKM B-1768 / DS2) (Halobacterium volcanii).